The sequence spans 318 residues: DNA repair nuclease/redox regulator APEX1 (318 aa).

A necessary for interaction with YBX1, binding to RNA, association together with NPM1 to rRNA, endoribonuclease activity on abasic RNA and localization in the nucleoli region spans residues 1 to 33; sequence MPKRGKKGAVAEDGDELKTEPEAKKSKTTAKKN. The interval 1 to 60 is disordered; that stretch reads MPKRGKKGAVAEDGDELKTEPEAKKSKTTAKKNDKEAAGEGPALYEDPPDQKTSPSGKPA. Residues lysine 6 and lysine 7 each carry the N6-acetyllysine; by EP300 modification. Residues 8–13 carry the Nuclear localization signal (NLS) motif; it reads GAVAED. Residues 16 to 38 are compositionally biased toward basic and acidic residues; that stretch reads ELKTEPEAKKSKTTAKKNDKEAA. Positions 23–33 are necessary for interaction with NPM1 and for efficient rRNA binding; sequence AKKSKTTAKKN. Lysine 27, lysine 31, lysine 32, and lysine 35 each carry N6-acetyllysine. A Phosphoserine modification is found at serine 54. The Nuclear export signal (NES) signature appears at 64–80; that stretch reads ICSWNVDGLRAWIKKKG. Cysteine 65 is modified (S-nitrosocysteine; alternate). Cysteine 65 and cysteine 93 form a disulfide bridge. Aspartate 70 provides a ligand contact to Mg(2+). The residue at position 93 (cysteine 93) is an S-nitrosocysteine; alternate. Glutamate 96 is a binding site for Mg(2+). Tyrosine 171 is a catalytic residue. Lysine 197 carries the post-translational modification N6-acetyllysine. Mg(2+)-binding residues include aspartate 210 and asparagine 212. Residue aspartate 210 is the Proton donor/acceptor of the active site. Threonine 233 is subject to Phosphothreonine; by CDK5. The tract at residues 289–318 is mitochondrial targeting sequence (MTS); the sequence is HSLLTALCDSKIRSKALGSDHCPITLYLAL. A Mg(2+)-binding site is contributed by aspartate 308. S-nitrosocysteine is present on cysteine 310.

This sequence belongs to the DNA repair enzymes AP/ExoA family. Monomer. Homodimer; disulfide-linked. Component of the SET complex, composed of at least APEX1, SET, ANP32A, HMGB2, NME1 and TREX1. Associates with the dimer XRCC5/XRCC6 in a DNA-dependent manner. Interacts with SIRT1; the interaction is increased in the context of genotoxic stress. Interacts with HDAC1, HDAC2 and HDAC3; the interactions are not dependent on the APEX1 acetylation status. Interacts with XRCC1; the interaction is induced by SIRT1 and increased with the APEX1 acetylated form. Interacts with NPM1 (via N-terminal domain); the interaction is RNA-dependent and decreases in hydrogen peroxide-damaged cells. Interacts (via N-terminus) with YBX1 (via C-terminus); the interaction is increased in presence of APEX1 acetylated at Lys-6 and Lys-7. Interacts with HNRNPL; the interaction is DNA-dependent. Interacts (via N-terminus) with KPNA1 and KPNA2. Interacts with TXN; the interaction stimulates the FOS/JUN AP-1 complex DNA-binding activity in a redox-dependent manner. Interacts with GZMA, KRT8, MDM2, POLB, PRDX6, PRPF19, RPLP0, TOMM20 and WDR77. Binds to CDK5. Requires Mg(2+) as cofactor. The cofactor is Mn(2+). Phosphorylated. Phosphorylation by kinase PKC or casein kinase CK2 results in enhanced redox activity that stimulates binding of the FOS/JUN AP-1 complex to its cognate binding site. AP-endodeoxyribonuclease activity is not affected by CK2-mediated phosphorylation. Phosphorylation of Thr-233 by CDK5 in response to MPP(+)/MPTP (1-methyl-4-phenylpyridinium) reduces AP-endodeoxyribonuclease activity resulting in accumulation of DNA damage and contributing to neuronal death. In terms of processing, acetylated on Lys-6 and Lys-7. Acetylation is increased by the transcriptional coactivator EP300 acetyltransferase, genotoxic agents like H(2)O(2) and methyl methanesulfonate (MMS). Acetylation increases its binding affinity to the negative calcium response element (nCaRE) DNA promoter. The acetylated form induces a stronger binding of YBX1 to the Y-box sequence in the MDR1 promoter than the unacetylated form. Deacetylated on lysines. Lys-6 and Lys-7 are deacetylated by SIRT1. Post-translationally, cleaved at Lys-31 by granzyme A to create the mitochondrial form; leading in reduction of binding to DNA, AP endodeoxyribonuclease activity, redox activation of transcription factors and to enhanced cell death. Cleaved by granzyme K; leading to intracellular ROS accumulation and enhanced cell death after oxidative stress. Cys-69 and Cys-93 are nitrosylated in response to nitric oxide (NO) and lead to the exposure of the nuclear export signal (NES). In terms of processing, ubiquitinated by MDM2; leading to translocation to the cytoplasm and proteasomal degradation.

The protein localises to the nucleus. Its subcellular location is the nucleolus. It is found in the nucleus speckle. The protein resides in the endoplasmic reticulum. It localises to the cytoplasm. The protein localises to the mitochondrion. It catalyses the reaction a deoxyribonucleotide-2'-deoxyribose-5'-monophosphate-DNA + H2O = a 5'-end 2'-deoxyribose-5'-monophosphate-DNA + a 3'-end 2'-deoxyribonucleotide-DNA + H(+). The catalysed reaction is Exonucleolytic cleavage in the 3'- to 5'-direction to yield nucleoside 5'-phosphates.. The enzyme catalyses a 3'-end 2'-deoxyribonucleotide-3'-phosphoglycolate-DNA + H2O = 2-phosphoglycolate + a 3'-end 2'-deoxyribonucleotide-DNA + H(+). It carries out the reaction a 3'-end 2'-deoxyribonucleotide-8-oxoguanine-DNA + H2O = 8-oxo-dGMP + a 3'-end 2'-deoxyribonucleotide-DNA + H(+). With respect to regulation, NPM1 stimulates endodeoxyribonuclease activity on double-stranded DNA with AP sites, but inhibits endoribonuclease activity on single-stranded RNA containing AP sites. Its function is as follows. Multifunctional protein that plays a central role in the cellular response to oxidative stress. The two major activities of APEX1 are DNA repair and redox regulation of transcriptional factors. Functions as an apurinic/apyrimidinic (AP) endodeoxyribonuclease in the base excision repair (BER) pathway of DNA lesions induced by oxidative and alkylating agents. Initiates repair of AP sites in DNA by catalyzing hydrolytic incision of the phosphodiester backbone immediately adjacent to the damage, generating a single-strand break with 5'-deoxyribose phosphate and 3'-hydroxyl ends. Also incises at AP sites in the DNA strand of DNA/RNA hybrids, single-stranded DNA regions of R-loop structures, and single-stranded RNA molecules. Operates at switch sites of immunoglobulin (Ig) constant regions where it mediates Ig isotype class switch recombination. Processes AP sites induced by successive action of AICDA and UNG. Generates staggered nicks in opposite DNA strands resulting in the formation of double-strand DNA breaks that are finally resolved via non-homologous end joining repair pathway. Has 3'-5' exodeoxyribonuclease activity on mismatched deoxyribonucleotides at the 3' termini of nicked or gapped DNA molecules during short-patch BER. Possesses DNA 3' phosphodiesterase activity capable of removing lesions (such as phosphoglycolate and 8-oxoguanine) blocking the 3' side of DNA strand breaks. Also acts as an endoribonuclease involved in the control of single-stranded RNA metabolism. Plays a role in regulating MYC mRNA turnover by preferentially cleaving in between UA and CA dinucleotides of the MYC coding region determinant (CRD). In association with NMD1, plays a role in the rRNA quality control process during cell cycle progression. Acts as a loading factor for POLB onto non-incised AP sites in DNA and stimulates the 5'-terminal deoxyribose 5'-phosphate (dRp) excision activity of POLB. Exerts reversible nuclear redox activity to regulate DNA binding affinity and transcriptional activity of transcriptional factors by controlling the redox status of their DNA-binding domain, such as the FOS/JUN AP-1 complex after exposure to IR. Involved in calcium-dependent down-regulation of parathyroid hormone (PTH) expression by binding to negative calcium response elements (nCaREs). Together with HNRNPL or the dimer XRCC5/XRCC6, associates with nCaRE, acting as an activator of transcriptional repression. May also play a role in the epigenetic regulation of gene expression by participating in DNA demethylation. Stimulates the YBX1-mediated MDR1 promoter activity, when acetylated at Lys-6 and Lys-7, leading to drug resistance. Plays a role in protection from granzyme-mediated cellular repair leading to cell death. Binds DNA and RNA. Associates, together with YBX1, on the MDR1 promoter. Together with NPM1, associates with rRNA. This chain is DNA repair nuclease/redox regulator APEX1 (APEX1), found in Pongo pygmaeus (Bornean orangutan).